A 511-amino-acid polypeptide reads, in one-letter code: DnaJ homolog 1, mitochondrial (511 aa).

The transit peptide at 1 to 55 directs the protein to the mitochondrion; that stretch reads MAFQQGVLSRCSGVFRHHVGHSRHINNILYRHAIAFASIAPRIPKSSFHTSAIRN. One can recognise a J domain in the interval 59–127; sequence FKDPYDTLGL…RQQYDQFGPA (69 aa). The CR-type zinc finger occupies 217-297; sequence SKNVQLRFSA…CHGEGVQVNR (81 aa). CXXCXGXG motif repeat units follow at residues 230 to 237, 247 to 254, 269 to 276, and 285 to 292; these read CSTCSGTG, CSTCHGTG, CPTCNGEG, and CTKCHGEG.

It localises to the mitochondrion. Functionally, plays a role in mitochondrial biogenesis and protein folding. This is DnaJ homolog 1, mitochondrial (MDJ1) from Saccharomyces cerevisiae (strain ATCC 204508 / S288c) (Baker's yeast).